We begin with the raw amino-acid sequence, 217 residues long: MVNFDIARKRMVQEQIVGRGITTPRLLEVFQKVPRHLFVQEAMAVQAYSDGPLPIGEKQTISQPYIVALMTDLLELTGNDHVLEIGTGSGYQTAILASLVRRVWTIERIRPLAMQARKVLDTLHLLNVNIKVGDGTLGWPEEGPFDAILVTAGAPAVPETLAAQLAPGGRLVIPVGDESNQTLLRIRKAADGTLTQETGIGCRFVPLIGQQGWQLNS.

Residue serine 62 is part of the active site.

Belongs to the methyltransferase superfamily. L-isoaspartyl/D-aspartyl protein methyltransferase family.

It localises to the cytoplasm. It catalyses the reaction [protein]-L-isoaspartate + S-adenosyl-L-methionine = [protein]-L-isoaspartate alpha-methyl ester + S-adenosyl-L-homocysteine. Its function is as follows. Catalyzes the methyl esterification of L-isoaspartyl residues in peptides and proteins that result from spontaneous decomposition of normal L-aspartyl and L-asparaginyl residues. It plays a role in the repair and/or degradation of damaged proteins. This is Protein-L-isoaspartate O-methyltransferase from Trichlorobacter lovleyi (strain ATCC BAA-1151 / DSM 17278 / SZ) (Geobacter lovleyi).